The primary structure comprises 411 residues: Tyrosine--tRNA ligase (411 aa).

Residue Tyr34 participates in L-tyrosine binding. The 'HIGH' region motif lies at 39 to 48 (CTATSLHIGS). Residues Tyr171 and Gln175 each coordinate L-tyrosine. The 'KMSKS' region motif lies at 231-235 (KMGKT). Residue Lys234 coordinates ATP. In terms of domain architecture, S4 RNA-binding spans 345-411 (ISAYELFHEA…GKKKHILVRV (67 aa)).

It belongs to the class-I aminoacyl-tRNA synthetase family. TyrS type 1 subfamily. Homodimer.

The protein localises to the cytoplasm. The enzyme catalyses tRNA(Tyr) + L-tyrosine + ATP = L-tyrosyl-tRNA(Tyr) + AMP + diphosphate + H(+). In terms of biological role, catalyzes the attachment of tyrosine to tRNA(Tyr) in a two-step reaction: tyrosine is first activated by ATP to form Tyr-AMP and then transferred to the acceptor end of tRNA(Tyr). The chain is Tyrosine--tRNA ligase from Rickettsia conorii (strain ATCC VR-613 / Malish 7).